A 282-amino-acid chain; its full sequence is NADPH-dependent 7-cyano-7-deazaguanine reductase (282 aa).

88-90 (IES) provides a ligand contact to substrate. NADPH is bound at residue 90–91 (SK). Catalysis depends on C190, which acts as the Thioimide intermediate. D197 serves as the catalytic Proton donor. 229–230 (HE) lines the substrate pocket. 258–259 (RG) contacts NADPH.

Belongs to the GTP cyclohydrolase I family. QueF type 2 subfamily. Homodimer.

The protein resides in the cytoplasm. It catalyses the reaction 7-aminomethyl-7-carbaguanine + 2 NADP(+) = 7-cyano-7-deazaguanine + 2 NADPH + 3 H(+). Its pathway is tRNA modification; tRNA-queuosine biosynthesis. In terms of biological role, catalyzes the NADPH-dependent reduction of 7-cyano-7-deazaguanine (preQ0) to 7-aminomethyl-7-deazaguanine (preQ1). The protein is NADPH-dependent 7-cyano-7-deazaguanine reductase of Escherichia coli O127:H6 (strain E2348/69 / EPEC).